The chain runs to 336 residues: Formimidoylglutamase (336 aa).

Positions 129, 160, 162, 164, 257, and 259 each coordinate Mn(2+).

The protein belongs to the arginase family. Requires Mn(2+) as cofactor.

It catalyses the reaction N-formimidoyl-L-glutamate + H2O = formamide + L-glutamate. The protein operates within amino-acid degradation; L-histidine degradation into L-glutamate; L-glutamate from N-formimidoyl-L-glutamate (hydrolase route): step 1/1. Functionally, catalyzes the conversion of N-formimidoyl-L-glutamate to L-glutamate and formamide. This Vibrio vulnificus (strain CMCP6) protein is Formimidoylglutamase.